The following is an 88-amino-acid chain: MQKTRFDELVDFPCHFTFKVMGVASDSLPDQVVEVLQEHAPGDYSPSVKPSSKGNYHSISVAVRVESQQHIEILYRSLSDIEDVRYVL.

This sequence belongs to the UPF0250 family.

The sequence is that of UPF0250 protein IL0958 from Idiomarina loihiensis (strain ATCC BAA-735 / DSM 15497 / L2-TR).